A 64-amino-acid polypeptide reads, in one-letter code: Translation machinery-associated protein 7B (64 aa).

Positions M1–K38 are disordered. The segment covering K27–K38 has biased composition (basic and acidic residues).

This sequence belongs to the TMA7 family.

This is Translation machinery-associated protein 7B from Homo sapiens (Human).